Reading from the N-terminus, the 179-residue chain is Large ribosomal subunit protein bL27c (179 aa).

Residues 1–51 (MAVSFSLVGAFKGLSLASSSSFLKGDFGAAFPVAPKFSVSFPLKSPLTIES) constitute a chloroplast transit peptide.

Belongs to the bacterial ribosomal protein bL27 family. In terms of assembly, part of the 50S ribosomal subunit.

It localises to the plastid. The protein resides in the chloroplast. The polypeptide is Large ribosomal subunit protein bL27c (RPL27) (Nicotiana tabacum (Common tobacco)).